The sequence spans 306 residues: Aspartate carbamoyltransferase catalytic subunit (306 aa).

Positions 51 and 52 each coordinate carbamoyl phosphate. Lysine 79 is an L-aspartate binding site. Carbamoyl phosphate is bound by residues arginine 101, histidine 129, and glutamine 132. L-aspartate-binding residues include arginine 162 and arginine 213. Carbamoyl phosphate is bound by residues alanine 254 and proline 255.

It belongs to the aspartate/ornithine carbamoyltransferase superfamily. ATCase family. In terms of assembly, heterododecamer (2C3:3R2) of six catalytic PyrB chains organized as two trimers (C3), and six regulatory PyrI chains organized as three dimers (R2).

It catalyses the reaction carbamoyl phosphate + L-aspartate = N-carbamoyl-L-aspartate + phosphate + H(+). It participates in pyrimidine metabolism; UMP biosynthesis via de novo pathway; (S)-dihydroorotate from bicarbonate: step 2/3. In terms of biological role, catalyzes the condensation of carbamoyl phosphate and aspartate to form carbamoyl aspartate and inorganic phosphate, the committed step in the de novo pyrimidine nucleotide biosynthesis pathway. In Bacillus thuringiensis (strain Al Hakam), this protein is Aspartate carbamoyltransferase catalytic subunit.